The sequence spans 774 residues: DNA ligase 3 (774 aa).

Positions 1–25 (MPPKKRMKNGSSLKSTSKKGEKSRN) are disordered. The active-site N6-AMP-lysine intermediate is K433.

It belongs to the ATP-dependent DNA ligase family.

Its subcellular location is the nucleus. The catalysed reaction is ATP + (deoxyribonucleotide)n-3'-hydroxyl + 5'-phospho-(deoxyribonucleotide)m = (deoxyribonucleotide)n+m + AMP + diphosphate.. The polypeptide is DNA ligase 3 (adl1) (Schizosaccharomyces pombe (strain 972 / ATCC 24843) (Fission yeast)).